The sequence spans 431 residues: MKNYIEIVDVYARQILDSRCNPTVEVEVELEDGTVGVAAVPSGASTGAFEAVELRDGDKSKYLGKGVLKAVDNVNTIIADELVGMNVLDQVAIDKTMIELDGTDNKAKLGANAMLGVSLACAKAAANSLGMSLYQYIGGVNGKVLPVPMMNIINGGKHADNNVDLQEFMIMPAGAPSFSEALRMCSEVYHALKSTLKAQGYDTGVGDEGGFAPNLKSNEEAIVVIIEAIKKAGYTPGEDIFIALDPASSEIFEDGKYNLAGEGRVLTPEEMANYYVELAEKYPIISIEDGMAEEDWDGWKILTEKIGNKVQLVGDDLFVTNTERLSKGIKLGVANSILIKLNQIGTLTETLNAIEMAERAGYTAVVSHRSGETEDTTIADLVVAVNAGQIKTGAPARSERVAKYNQLLRIEEELNDMGEYRGLKAFYNINK.

A (2R)-2-phosphoglycerate-binding site is contributed by Gln-166. The active-site Proton donor is the Glu-208. 3 residues coordinate Mg(2+): Asp-245, Glu-288, and Asp-315. Residues Lys-340, Arg-369, Ser-370, and Lys-391 each coordinate (2R)-2-phosphoglycerate. Lys-340 functions as the Proton acceptor in the catalytic mechanism.

It belongs to the enolase family. Mg(2+) serves as cofactor.

The protein resides in the cytoplasm. The protein localises to the secreted. It localises to the cell surface. It carries out the reaction (2R)-2-phosphoglycerate = phosphoenolpyruvate + H2O. It functions in the pathway carbohydrate degradation; glycolysis; pyruvate from D-glyceraldehyde 3-phosphate: step 4/5. Catalyzes the reversible conversion of 2-phosphoglycerate (2-PG) into phosphoenolpyruvate (PEP). It is essential for the degradation of carbohydrates via glycolysis. The chain is Enolase from Clostridium botulinum (strain ATCC 19397 / Type A).